The sequence spans 253 residues: 2-dehydro-3-deoxy-D-gluconate 5-dehydrogenase (253 aa).

Residue 14–38 participates in NAD(+) binding; that stretch reads VVTGCDTGLGQGMALGLAQAGCDIV. Residue S145 coordinates substrate. Y158 acts as the Proton acceptor in catalysis.

This sequence belongs to the short-chain dehydrogenases/reductases (SDR) family. Homotetramer.

The catalysed reaction is 2-dehydro-3-deoxy-D-gluconate + NAD(+) = 3-deoxy-D-glycero-2,5-hexodiulosonate + NADH + H(+). It catalyses the reaction 4-pregnen-20,21-diol-3-one + NAD(+) = 21-hydroxyprogesterone + NADH + H(+). In terms of biological role, catalyzes the reversible reduction of 2,5-diketo-3-deoxygluconate (DKII or 4,6-dihydroxy-2,5-dioxohexanoate) into 2-keto-3-deoxygluconate (KDG or 2-dehydro-3-deoxygluconate) with a concomitant oxidation of NADH. To a lesser extent, can also reduce 5-keto-D-gluconate and oxidize D-gluconate and 1,2-propanediol. Together with KduI, seems to play a role in the catabolism of hexuronates under osmotic stress conditions, substituting for the regular hexuronate degrading enzymes UxaABC and UxuAB whose expression is repressed in these conditions. In vitro, also exhibits NADH-dependent 20-ketosteroid reductase activity against eukaryotic steroid hormone 11-deoxycorticosterone (11-DOC), which is converted into the product 4-pregnen-20,21-diol-3-one. In addition to 11-DOC, five other C21 steroid compounds (11-deoxycortisol, cortisol, corticosterone, cortisone, and 21-hydroxypregnenolone) are reduced by KduD, but steroids lacking the hydroxyl group at C21 position, such as pregnenolone, testosterone propionate, cortisone acetate, or progesterone, cannot be used as substrate. The sequence is that of 2-dehydro-3-deoxy-D-gluconate 5-dehydrogenase from Escherichia coli (strain K12).